The chain runs to 369 residues: Probable serine/threonine-protein kinase FMP48 (369 aa).

The 368-residue stretch at Tyr2–Lys369 folds into the Protein kinase domain. Residues Ile8–Val16 and Lys31 each bind ATP. The active-site Proton acceptor is Asp133.

It belongs to the protein kinase superfamily. Ser/Thr protein kinase family.

It localises to the mitochondrion. The catalysed reaction is L-seryl-[protein] + ATP = O-phospho-L-seryl-[protein] + ADP + H(+). It catalyses the reaction L-threonyl-[protein] + ATP = O-phospho-L-threonyl-[protein] + ADP + H(+). The chain is Probable serine/threonine-protein kinase FMP48 (FMP48) from Saccharomyces cerevisiae (strain ATCC 204508 / S288c) (Baker's yeast).